Reading from the N-terminus, the 437-residue chain is ATP-dependent RNA helicase RhlB (437 aa).

The Q motif motif lies at 9–37 (QKFADLGLQPQVTEGLEKKGFEYCTPIQA). Residues 40-219 (LPVLLTGQDI…FEHMHNPEHV (180 aa)) form the Helicase ATP-binding domain. 53–60 (AQTGTGKT) contacts ATP. The DEAD box motif lies at 165–168 (DEAD). Positions 245–390 (ALLQTLIEEE…VSEYDASALI (146 aa)) constitute a Helicase C-terminal domain. The interval 397–437 (IRMRAPRVQQRRTNTGGTRSGNRKPQGRRPRQPRQSAPKQS) is disordered. The span at 417-428 (GNRKPQGRRPRQ) shows a compositional bias: basic residues.

It belongs to the DEAD box helicase family. RhlB subfamily. In terms of assembly, component of the RNA degradosome, which is a multiprotein complex involved in RNA processing and mRNA degradation.

The protein localises to the cytoplasm. The catalysed reaction is ATP + H2O = ADP + phosphate + H(+). Its function is as follows. DEAD-box RNA helicase involved in RNA degradation. Has RNA-dependent ATPase activity and unwinds double-stranded RNA. This is ATP-dependent RNA helicase RhlB from Vibrio parahaemolyticus serotype O3:K6 (strain RIMD 2210633).